A 110-amino-acid chain; its full sequence is Protein RnfH (110 aa).

A disordered region spans residues 86 to 110 (RQRRVEKTRKAGSIEGRRWQNKDSR). Basic and acidic residues predominate over residues 100-110 (EGRRWQNKDSR).

Belongs to the UPF0125 (RnfH) family.

This Paraburkholderia xenovorans (strain LB400) protein is Protein RnfH.